Reading from the N-terminus, the 264-residue chain is S-adenosylmethionine decarboxylase proenzyme (264 aa).

The Schiff-base intermediate with substrate; via pyruvic acid role is filled by S112. Position 112 is a pyruvic acid (Ser); by autocatalysis (S112). The Proton acceptor; for processing activity role is filled by H117. C140 (proton donor; for catalytic activity) is an active-site residue.

It belongs to the prokaryotic AdoMetDC family. Type 2 subfamily. Heterooctamer of four alpha and four beta chains arranged as a tetramer of alpha/beta heterodimers. Requires pyruvate as cofactor. Post-translationally, is synthesized initially as an inactive proenzyme. Formation of the active enzyme involves a self-maturation process in which the active site pyruvoyl group is generated from an internal serine residue via an autocatalytic post-translational modification. Two non-identical subunits are generated from the proenzyme in this reaction, and the pyruvate is formed at the N-terminus of the alpha chain, which is derived from the carboxyl end of the proenzyme. The post-translation cleavage follows an unusual pathway, termed non-hydrolytic serinolysis, in which the side chain hydroxyl group of the serine supplies its oxygen atom to form the C-terminus of the beta chain, while the remainder of the serine residue undergoes an oxidative deamination to produce ammonia and the pyruvoyl group blocking the N-terminus of the alpha chain.

It catalyses the reaction S-adenosyl-L-methionine + H(+) = S-adenosyl 3-(methylsulfanyl)propylamine + CO2. The protein operates within amine and polyamine biosynthesis; S-adenosylmethioninamine biosynthesis; S-adenosylmethioninamine from S-adenosyl-L-methionine: step 1/1. Functionally, catalyzes the decarboxylation of S-adenosylmethionine to S-adenosylmethioninamine (dcAdoMet), the propylamine donor required for the synthesis of the polyamines spermine and spermidine from the diamine putrescine. The chain is S-adenosylmethionine decarboxylase proenzyme from Salmonella choleraesuis (strain SC-B67).